Here is a 147-residue protein sequence, read N- to C-terminus: ATP synthase subunit 9, mitochondrial (147 aa).

The N-terminal 66 residues, 1-66, are a transit peptide targeting the mitochondrion; sequence MASTRVLASR…TTRQAFQKRA (66 aa). The next 2 membrane-spanning stretches (helical) occupy residues 86–106 and 123–143; these read SAAI…AALL and AILG…VALM.

The protein belongs to the ATPase C chain family. F-type ATPases have 2 components, CF(1) - the catalytic core - and CF(0) - the membrane proton channel. CF(1) has five subunits: alpha(3), beta(3), gamma(1), delta(1), epsilon(1). CF(0) has three main subunits: a, b and c.

It is found in the mitochondrion membrane. In terms of biological role, mitochondrial membrane ATP synthase (F(1)F(0) ATP synthase or Complex V) produces ATP from ADP in the presence of a proton gradient across the membrane which is generated by electron transport complexes of the respiratory chain. F-type ATPases consist of two structural domains, F(1) - containing the extramembraneous catalytic core and F(0) - containing the membrane proton channel, linked together by a central stalk and a peripheral stalk. During catalysis, ATP synthesis in the catalytic domain of F(1) is coupled via a rotary mechanism of the central stalk subunits to proton translocation. Part of the complex F(0) domain. A homomeric c-ring of probably 10 subunits is part of the complex rotary element. In Neurospora crassa (strain ATCC 24698 / 74-OR23-1A / CBS 708.71 / DSM 1257 / FGSC 987), this protein is ATP synthase subunit 9, mitochondrial (oli).